The sequence spans 591 residues: L-fucose isomerase (591 aa).

Catalysis depends on proton acceptor residues Glu-337 and Asp-361. Residues Glu-337, Asp-361, and His-528 each coordinate Mn(2+).

This sequence belongs to the L-fucose isomerase family. As to quaternary structure, homohexamer. Mn(2+) serves as cofactor.

It localises to the cytoplasm. It carries out the reaction L-fucose = L-fuculose. It participates in carbohydrate degradation; L-fucose degradation; L-lactaldehyde and glycerone phosphate from L-fucose: step 1/3. Converts the aldose L-fucose into the corresponding ketose L-fuculose. In Salmonella schwarzengrund (strain CVM19633), this protein is L-fucose isomerase.